The primary structure comprises 105 residues: Large ribosomal subunit protein eL30 (105 aa).

The protein belongs to the eukaryotic ribosomal protein eL30 family.

The chain is Large ribosomal subunit protein eL30 (RPL30) from Candida glabrata (strain ATCC 2001 / BCRC 20586 / JCM 3761 / NBRC 0622 / NRRL Y-65 / CBS 138) (Yeast).